The chain runs to 222 residues: Putative serine proteinase inhibitor 2 homolog second part (222 aa).

This sequence belongs to the serpin family. Poxviruses subfamily.

This chain is Putative serine proteinase inhibitor 2 homolog second part, found in Homo sapiens (Human).